The primary structure comprises 230 residues: 2,3-bisphosphoglycerate-dependent phosphoglycerate mutase 2 (230 aa).

Substrate is bound by residues 8–15 (RHGQSEWN), 21–22 (TG), R60, 87–90 (ERHY), K98, 114–115 (RR), and 183–184 (GN). Residue H9 is the Tele-phosphohistidine intermediate of the active site. The Proton donor/acceptor role is filled by E87.

The protein belongs to the phosphoglycerate mutase family. BPG-dependent PGAM subfamily.

The catalysed reaction is (2R)-2-phosphoglycerate = (2R)-3-phosphoglycerate. The protein operates within carbohydrate degradation; glycolysis; pyruvate from D-glyceraldehyde 3-phosphate: step 3/5. Functionally, catalyzes the interconversion of 2-phosphoglycerate and 3-phosphoglycerate. This is 2,3-bisphosphoglycerate-dependent phosphoglycerate mutase 2 from Lactiplantibacillus plantarum (strain ATCC BAA-793 / NCIMB 8826 / WCFS1) (Lactobacillus plantarum).